The following is a 404-amino-acid chain: Peroxisomal biogenesis factor 9 (404 aa).

Transmembrane regions (helical) follow at residues phenylalanine 73–phenylalanine 93, leucine 94–glycine 114, and phenylalanine 149–valine 169. The disordered stretch occupies residues aspartate 180 to serine 214. Residues glycine 181–serine 198 show a composition bias toward polar residues. Residues phenylalanine 349 to leucine 369 traverse the membrane as a helical segment.

It is found in the peroxisome membrane. Functionally, essential for the import of peroxisomal matrix proteins. The polypeptide is Peroxisomal biogenesis factor 9 (PEX9) (Yarrowia lipolytica (strain CLIB 122 / E 150) (Yeast)).